We begin with the raw amino-acid sequence, 92 residues long: MKTLVLLSALALLAFQVQADPIQNRDEESKIDEQPGKEDQAVSVSFGDPEGSSLQEECEDLICYCRTRGCKRRERLNGTCRKGHLMYMLWCC.

The N-terminal stretch at 1 to 19 (MKTLVLLSALALLAFQVQA) is a signal peptide. Residues 20 to 57 (DPIQNRDEESKIDEQPGKEDQAVSVSFGDPEGSSLQEE) constitute a propeptide that is removed on maturation. Residues 24–40 (NRDEESKIDEQPGKEDQ) are compositionally biased toward basic and acidic residues. The disordered stretch occupies residues 24–53 (NRDEESKIDEQPGKEDQAVSVSFGDPEGSS). 3 disulfides stabilise this stretch: C63-C92, C65-C80, and C70-C91.

It belongs to the alpha-defensin family.

It localises to the secreted. In terms of biological role, may have microbicidal activities. This Mus musculus (Mouse) protein is Alpha-defensin 25 (Defa25).